Consider the following 398-residue polypeptide: Serine/threonine-protein kinase ppk23 (398 aa).

Positions 74 to 359 (YEILEKIEEG…AKEALEHPYF (286 aa)) constitute a Protein kinase domain. ATP is bound by residues 80–88 (IEEGSYGIV) and lysine 103. Aspartate 198 serves as the catalytic Proton acceptor. The disordered stretch occupies residues 359 to 398 (FYESPRPKDPKFFPTFPSKAKGESKEKNVFQSFRSASPKK). The span at 387–398 (VFQSFRSASPKK) shows a compositional bias: polar residues.

Belongs to the protein kinase superfamily. Ser/Thr protein kinase family.

It is found in the nucleus. The enzyme catalyses L-seryl-[protein] + ATP = O-phospho-L-seryl-[protein] + ADP + H(+). It carries out the reaction L-threonyl-[protein] + ATP = O-phospho-L-threonyl-[protein] + ADP + H(+). This Schizosaccharomyces pombe (strain 972 / ATCC 24843) (Fission yeast) protein is Serine/threonine-protein kinase ppk23 (ppk23).